The following is a 532-amino-acid chain: Bifunctional purine biosynthesis protein PurH (532 aa).

An MGS-like domain is found at 1-148 (MQTPKPIKRA…KNHKDVTIVV (148 aa)).

It belongs to the PurH family.

It carries out the reaction (6R)-10-formyltetrahydrofolate + 5-amino-1-(5-phospho-beta-D-ribosyl)imidazole-4-carboxamide = 5-formamido-1-(5-phospho-D-ribosyl)imidazole-4-carboxamide + (6S)-5,6,7,8-tetrahydrofolate. The enzyme catalyses IMP + H2O = 5-formamido-1-(5-phospho-D-ribosyl)imidazole-4-carboxamide. It participates in purine metabolism; IMP biosynthesis via de novo pathway; 5-formamido-1-(5-phospho-D-ribosyl)imidazole-4-carboxamide from 5-amino-1-(5-phospho-D-ribosyl)imidazole-4-carboxamide (10-formyl THF route): step 1/1. Its pathway is purine metabolism; IMP biosynthesis via de novo pathway; IMP from 5-formamido-1-(5-phospho-D-ribosyl)imidazole-4-carboxamide: step 1/1. The chain is Bifunctional purine biosynthesis protein PurH from Alteromonas mediterranea (strain DSM 17117 / CIP 110805 / LMG 28347 / Deep ecotype).